Reading from the N-terminus, the 604-residue chain is MRVVAAILYINVVVALICGLGIQGGALDLQDYPSVSFQGDAMQLQDYPSITFNLKGATWQTYRDFIEKLREIVTRGATTIAGTSIPVLNRVVPDSRRFVYVRLINLDGNVVTIAVDVTSLYVVAFSANNNGYFFSDSTETERTNLFVGIPRGDPLGFTGNYNSLENWAGADRGSIPLGPALLNKAIRNLRSNGRDSKAAKSLIVVIQMVSEAARFRRIEEQVRRSIADQDTFTPGSLMITMEKKWSKMSQQVERSVNDQGIFTGIFTRTVQLIDDNLQTLNIDNFNALSLHTMLAILLFRCRTTTSSHNTLPAASNIVLMGEDYVDKDDEKCTVGEPTRRISGRAGWCVDVKDGRDNDGNPIQVLSCGDGQERKQQWTFHRDGTIRSKLGKCMTAYGFKHGEYVMIYDCDTAIAGANKWVVSIDGTITNPISGLVLTAPRGATGTTLLVEKNVHAARQCWRVGDDVEPIVTKIVGFQEKCLEANYLENTNVSRYTKVFLDDCVLDRQQQRWALYSDGTIRADSDRSLRVTADGHRSLDSIIILACKGWGNQRWVFNTDGTILNPNAKLVMDVKDSDVSLLQIILHQSTGKPNQKWLTVTLPRTS.

The N-terminal stretch at 1 to 43 is a signal peptide; it reads MRVVAAILYINVVVALICGLGIQGGALDLQDYPSVSFQGDAMQ. Glu-211 is an active-site residue. 3 disulfide bridges follow: Cys-301–Cys-332, Cys-348–Cys-367, and Cys-392–Cys-409. Ricin B-type lectin domains lie at 335–463 and 466–598; these read GEPT…WRVG and VEPI…WLTV. The 1-alpha repeat unit spans residues 345–387; it reads AGWCVDVKDGRDNDGNPIQVLSCGDGQERKQQWTFHRDGTIRS. A 1-beta repeat occupies 389–429; it reads LGKCMTAYGFKHGEYVMIYDCDTAIAGANKWVVSIDGTITN. Residues 432–465 form a 1-gamma repeat; it reads SGLVLTAPRGATGTTLLVEKNVHAARQCWRVGDD. A 2-alpha repeat occupies 477–521; it reads QEKCLEANYLENTNVSRYTKVFLDDCVLDRQQQRWALYSDGTIRA. A disulfide bridge links Cys-480 with Cys-502. N-linked (GlcNAc...) asparagine glycosylation is present at Asn-490. A 2-beta repeat occupies 525–563; sequence RSLRVTADGHRSLDSIIILACKGWGNQRWVFNTDGTILN. Residues 566-599 form a 2-gamma repeat; the sequence is AKLVMDVKDSDVSLLQIILHQSTGKPNQKWLTVT.

Belongs to the ribosome-inactivating protein family. Type 2 RIP subfamily. As to quaternary structure, disulfide-linked dimer of A and B chains. In terms of processing, the precursor is processed in two chains, A and B, that are linked by a disulfide bond. Post-translationally, glycosylated. The N-terminus is blocked. Expressed in rhizome and abundantly in leaves (at protein level).

It catalyses the reaction Endohydrolysis of the N-glycosidic bond at one specific adenosine on the 28S rRNA.. Strongly inhibited by asialofetuin and asialomucin. In terms of biological role, gal/GalNAc-specific agglutinin. Behaves as a type-2 ribosome-inactivating protein. Inhibits mammalian ribosomes. The A chain is responsible for inhibiting protein synthesis through the catalytic inactivation of 60S ribosomal subunits by removing adenine from position 4,324 of 28S rRNA. The B chain binds to cell receptors and probably facilitates the entry into the cell of the A chain; B chains are also responsible for cell agglutination (lectin activity). Involved in plant defense against insects. Has very low cytotoxic activity against the human tumor cell line Molt4, but higher against CEM. This chain is Ribosome-inactivating protein PMRIPm, found in Polygonatum multiflorum (Solomon's seal).